A 410-amino-acid chain; its full sequence is UDP-N-acetylglucosamine--dolichyl-phosphate N-acetylglucosaminephosphotransferase (410 aa).

Topologically, residues 1-10 (MWAFPELPLP) are lumenal. The helical transmembrane segment at 11-40 (LPLLVNLIGSLLGFVATVTLIPAFRSHFIA) threads the bilayer. Residues 41 to 60 (ARLCGQDLNKLSQQQIPESQ) lie on the Cytoplasmic side of the membrane. Residues 46–48 (QDL) and Glu-58 contribute to the UDP-N-acetyl-alpha-D-glucosamine site. The chain crosses the membrane as a helical span at residues 61–80 (GVISGAVFLIILFCFIPFPF). At 81-93 (LNCFVEEQCKAFP) the chain is on the lumenal side. A helical membrane pass occupies residues 94–120 (HHEFVALIGALLAICCMIFLGFADDVL). Residues 121–123 (NLR) lie on the Cytoplasmic side of the membrane. Residues 124 to 145 (WRHKLLLPTAASLPLLMVYFTN) traverse the membrane as a helical segment. Position 127 (Lys-127) interacts with dolichyl phosphate. Over 146–168 (FGNTTIVVPKPFRWILGLHLDLG) the chain is Lumenal. An N-linked (GlcNAc...) asparagine glycan is attached at Asn-148. A helical transmembrane segment spans residues 169 to 188 (ILYYVYMGLLAVFCTNAINI). Residue 180–188 (VFCTNAINI) coordinates dolichyl phosphate. Residue Asn-187 coordinates Mg(2+). The Cytoplasmic segment spans residues 189-194 (LAGING). Asn-193 contributes to the UDP-N-acetyl-alpha-D-glucosamine binding site. The helical transmembrane segment at 195–215 (LEAGQSLVISASIIVFNLVEL) threads the bilayer. Residues 216–220 (EGDYR) lie on the Lumenal side of the membrane. Residues 221–244 (DDHIFSLYFMIPFFFTTLGLLYHN) traverse the membrane as a helical segment. Over 245-252 (WYPSRVFV) the chain is Cytoplasmic. Residues 253–271 (GDTFCYFAGMTFAVVGILG) form a helical membrane-spanning segment. Asp-254 serves as a coordination point for Mg(2+). Over 272–273 (HF) the chain is Lumenal. Residues 274–295 (SKTMLLFFMPQVFNFLYSLPQL) form a helical membrane-spanning segment. At 296 to 377 (FHIIPCPRHR…LLLKVFGPIH (82 aa)) the chain is on the cytoplasmic side. 303–305 (RHR) provides a ligand contact to UDP-N-acetyl-alpha-D-glucosamine. The helical transmembrane segment at 378–402 (ERNLTLLLLLLQVLSSAATFSIRYQ) threads the bilayer. Over 403–410 (LVRLFYDV) the chain is Lumenal.

The protein belongs to the glycosyltransferase 4 family. Homodimer. Mg(2+) is required as a cofactor.

Its subcellular location is the endoplasmic reticulum membrane. It catalyses the reaction a di-trans,poly-cis-dolichyl phosphate + UDP-N-acetyl-alpha-D-glucosamine = an N-acetyl-alpha-D-glucosaminyl-diphospho-di-trans,poly-cis-dolichol + UMP. It functions in the pathway protein modification; protein glycosylation. Its activity is regulated as follows. Inhibited by natural nucleoside antibiotic tunicamycin, which acts as a structural analog and competitor of UDP-GlcNAc. Functionally, UDP-N-acetylglucosamine--dolichyl-phosphate N-acetylglucosaminephosphotransferase that operates in the biosynthetic pathway of dolichol-linked oligosaccharides, the glycan precursors employed in protein asparagine (N)-glycosylation. The assembly of dolichol-linked oligosaccharides begins on the cytosolic side of the endoplasmic reticulum membrane and finishes in its lumen. The sequential addition of sugars to dolichol pyrophosphate produces dolichol-linked oligosaccharides containing fourteen sugars, including two GlcNAcs, nine mannoses and three glucoses. Once assembled, the oligosaccharide is transferred from the lipid to nascent proteins by oligosaccharyltransferases. Catalyzes the initial step of dolichol-linked oligosaccharide biosynthesis, transfering GlcNAc-1-P from cytosolic UDP-GlcNAc onto the carrier lipid dolichyl phosphate (P-dolichol), yielding GlcNAc-P-P-dolichol embedded in the cytoplasmic leaflet of the endoplasmic reticulum membrane. The polypeptide is UDP-N-acetylglucosamine--dolichyl-phosphate N-acetylglucosaminephosphotransferase (Mus musculus (Mouse)).